The following is an 802-amino-acid chain: Aldehyde dehydrogenase family 16 member A1 (802 aa).

The segment at 513-554 is disordered; sequence SLPSGPETGPSPAPPYGLFVRGRFQSPGTQSSRPIKDSSGKV.

Belongs to the aldehyde dehydrogenase family. In terms of assembly, interacts with SPG21.

This is Aldehyde dehydrogenase family 16 member A1 (Aldh16a1) from Rattus norvegicus (Rat).